Here is a 197-residue protein sequence, read N- to C-terminus: Thymidine kinase (197 aa).

ATP-binding positions include 9–16 (AAMNAGKS) and 83–86 (DESQ). Glu84 (proton acceptor) is an active-site residue. Zn(2+) is bound by residues Cys141, Cys143, Cys178, and Cys181.

This sequence belongs to the thymidine kinase family. Homotetramer.

The protein resides in the cytoplasm. The enzyme catalyses thymidine + ATP = dTMP + ADP + H(+). The polypeptide is Thymidine kinase (Albidiferax ferrireducens (strain ATCC BAA-621 / DSM 15236 / T118) (Rhodoferax ferrireducens)).